The chain runs to 403 residues: 5,7-dihydroxy-2-methylchromone synthase (403 aa).

Histidine 68 is a binding site for CoA. Cysteine 174 is a catalytic residue. Cysteine 174 carries the cysteine sulfinic acid (-SO2H) modification. CoA contacts are provided by residues leucine 277, serine 281, and glycine 318 to alanine 321.

The protein belongs to the thiolase-like superfamily. Chalcone/stilbene synthases family. In terms of assembly, homodimer.

It carries out the reaction 5 malonyl-CoA + 4 H(+) = 5,7-dihydroxy-2-methyl-4H-chromen-4-one + 5 CO2 + 5 CoA + H2O. The protein operates within secondary metabolite biosynthesis; flavonoid biosynthesis. Its function is as follows. Catalyzes the iterative condensations of 5 molecules of malonyl-CoA to produce a pentaketide 5,7-dihydroxy-2-methylchromone. This is 5,7-dihydroxy-2-methylchromone synthase from Aloe arborescens (Kidachi aloe).